The following is a 291-amino-acid chain: Homoserine kinase (291 aa).

An ATP-binding site is contributed by 80–90 (PLARGLGSSST).

Belongs to the GHMP kinase family. Homoserine kinase subfamily.

Its subcellular location is the cytoplasm. The enzyme catalyses L-homoserine + ATP = O-phospho-L-homoserine + ADP + H(+). It functions in the pathway amino-acid biosynthesis; L-threonine biosynthesis; L-threonine from L-aspartate: step 4/5. In terms of biological role, catalyzes the ATP-dependent phosphorylation of L-homoserine to L-homoserine phosphate. This Lactiplantibacillus plantarum (strain ATCC BAA-793 / NCIMB 8826 / WCFS1) (Lactobacillus plantarum) protein is Homoserine kinase.